The sequence spans 163 residues: Nucleotide-binding protein CYA_0935 (163 aa).

The protein belongs to the YajQ family.

Functionally, nucleotide-binding protein. The protein is Nucleotide-binding protein CYA_0935 of Synechococcus sp. (strain JA-3-3Ab) (Cyanobacteria bacterium Yellowstone A-Prime).